A 266-amino-acid polypeptide reads, in one-letter code: Oxygen-evolving enhancer protein 2-3, chloroplastic (266 aa).

Residues 1–80 (MASTQCFLHH…VGSKVSPADA (80 aa)) constitute a chloroplast transit peptide.

The protein belongs to the PsbP family.

The protein resides in the plastid. It localises to the chloroplast thylakoid membrane. Its function is as follows. May be involved in the regulation of photosystem II. The polypeptide is Oxygen-evolving enhancer protein 2-3, chloroplastic (PSBP3) (Nicotiana tabacum (Common tobacco)).